A 199-amino-acid polypeptide reads, in one-letter code: Putative DNA-directed RNA polymerase subunit L376 (199 aa).

Belongs to the eukaryotic RPB7/RPC8 RNA polymerase subunit family.

The protein localises to the virion. It carries out the reaction RNA(n) + a ribonucleoside 5'-triphosphate = RNA(n+1) + diphosphate. The sequence is that of Putative DNA-directed RNA polymerase subunit L376 from Acanthamoeba polyphaga (Amoeba).